Consider the following 69-residue polypeptide: DNA gyrase inhibitor YacG (69 aa).

Residues Cys-7, Cys-10, Cys-26, and Cys-30 each contribute to the Zn(2+) site.

This sequence belongs to the DNA gyrase inhibitor YacG family. Interacts with GyrB. It depends on Zn(2+) as a cofactor.

Its function is as follows. Inhibits all the catalytic activities of DNA gyrase by preventing its interaction with DNA. Acts by binding directly to the C-terminal domain of GyrB, which probably disrupts DNA binding by the gyrase. The sequence is that of DNA gyrase inhibitor YacG from Shewanella sp. (strain W3-18-1).